The chain runs to 496 residues: O-acetyltransferase cpsE (496 aa).

Residues 203–217 show a composition bias toward polar residues; sequence IGTQGQLPDGVQSSD. The interval 203–228 is disordered; it reads IGTQGQLPDGVQSSDDPTDGAGDIFE.

It belongs to the fumigaclavine B O-acetyltransferase family.

It catalyses the reaction campesine A + acetyl-CoA = campesine C + CoA. Its pathway is alkaloid biosynthesis. Functionally, O-acetyltransferase; part of the gene cluster that mediates the biosynthesis of campesine G, a dimeric indole piperazine alkaloid that shows good insecticidal activity Galleria mellonella. Within the pathway, cpsE acetylates N13 of campesine A to produce campesine C. CpsE produces an inseparable mixture of two acyl-atropisomers due to the spontaneous rotation of an acyl group at N13 of piperazine ring. The non-canonical non-ribosomal peptide synthetase cpsA catalyzes the first steps of the pathway by producing L-tryptophanal and L-valinal from their respective amino-acids. These products condensate spontaneously to form trypyl-valyl pyrazine also known as didehydrocampesine A. The NmrA-like family domain-containing oxidoreductase cpsB is the next enzyme in cps pathway and reduces the unstable didehydrocampesine A to campesine A. The methyltransferase cpsF and the acetyltransferase cpsE both recognize N13 of piperazine ring to carry out methylation and acetylation of campesine A to produce campesine C and B, respectively. The cytochrome P450 monooxygenase cpsD then acts as a dimerase that catalyzes oxidative heterocoupling between campesine B and C to produce heterodimers with unexpected 6/5/6/6/6/6/5/6 eight-ring scaffold called campesine D. Finally,the cytochrome P450 monooxygenase cpsC is a regioselective dehydrogenase that catalyzes dehydrogenation reaction towards C2-N1 to produce campesine G. The sequence is that of O-acetyltransferase cpsE from Aspergillus campestris (strain IBT 28561).